Here is a 336-residue protein sequence, read N- to C-terminus: F420-dependent glucose-6-phosphate dehydrogenase (336 aa).

Asp39 is a coenzyme F420-(gamma-Glu)n binding site. The active-site Proton donor is His40. Coenzyme F420-(gamma-Glu)n is bound by residues Thr76 and Thr107 to Gly108. Catalysis depends on Glu109, which acts as the Proton acceptor. Coenzyme F420-(gamma-Glu)n-binding positions include Asn112, Gly177 to Gly178, and Val180 to Val181. Positions 195, 198, 259, and 283 each coordinate substrate.

This sequence belongs to the F420-dependent glucose-6-phosphate dehydrogenase family. In terms of assembly, homodimer.

It catalyses the reaction oxidized coenzyme F420-(gamma-L-Glu)(n) + D-glucose 6-phosphate + H(+) = 6-phospho-D-glucono-1,5-lactone + reduced coenzyme F420-(gamma-L-Glu)(n). Its function is as follows. Catalyzes the coenzyme F420-dependent oxidation of glucose 6-phosphate (G6P) to 6-phosphogluconolactone. Appears to have a role in resistance to oxidative stress, via its consumption of G6P that serves as a source of reducing power to combat oxidative stress in mycobacteria. This is F420-dependent glucose-6-phosphate dehydrogenase from Mycolicibacterium fortuitum (Mycobacterium fortuitum).